We begin with the raw amino-acid sequence, 433 residues long: Bifunctional protein GlmU (433 aa).

Residues 1 to 226 are pyrophosphorylase; it reads MLSVIILAAG…EECFLGVNSQ (226 aa). UDP-N-acetyl-alpha-D-glucosamine-binding positions include 7–10, lysine 21, and 80–81; these read LAAG and GT. Aspartate 106 contributes to the Mg(2+) binding site. UDP-N-acetyl-alpha-D-glucosamine contacts are provided by glycine 138, glutamate 152, asparagine 167, and asparagine 224. Residue asparagine 224 coordinates Mg(2+). Residues 227 to 247 form a linker region; it reads TERAKAEEIMLERLRKNAMDL. Residues 248–433 are N-acetyltransferase; it reads GVVMQLPSSI…NGYFKFFKKP (186 aa). UDP-N-acetyl-alpha-D-glucosamine-binding residues include arginine 311 and lysine 328. Histidine 339 serves as the catalytic Proton acceptor. Tyrosine 342 and asparagine 353 together coordinate UDP-N-acetyl-alpha-D-glucosamine. Residues alanine 356, 362–363, serine 381, serine 399, and arginine 416 contribute to the acetyl-CoA site; that span reads NY.

It in the N-terminal section; belongs to the N-acetylglucosamine-1-phosphate uridyltransferase family. In the C-terminal section; belongs to the transferase hexapeptide repeat family. In terms of assembly, homotrimer. Mg(2+) is required as a cofactor.

It is found in the cytoplasm. The enzyme catalyses alpha-D-glucosamine 1-phosphate + acetyl-CoA = N-acetyl-alpha-D-glucosamine 1-phosphate + CoA + H(+). The catalysed reaction is N-acetyl-alpha-D-glucosamine 1-phosphate + UTP + H(+) = UDP-N-acetyl-alpha-D-glucosamine + diphosphate. The protein operates within nucleotide-sugar biosynthesis; UDP-N-acetyl-alpha-D-glucosamine biosynthesis; N-acetyl-alpha-D-glucosamine 1-phosphate from alpha-D-glucosamine 6-phosphate (route II): step 2/2. It participates in nucleotide-sugar biosynthesis; UDP-N-acetyl-alpha-D-glucosamine biosynthesis; UDP-N-acetyl-alpha-D-glucosamine from N-acetyl-alpha-D-glucosamine 1-phosphate: step 1/1. It functions in the pathway bacterial outer membrane biogenesis; LPS lipid A biosynthesis. Its function is as follows. Catalyzes the last two sequential reactions in the de novo biosynthetic pathway for UDP-N-acetylglucosamine (UDP-GlcNAc). The C-terminal domain catalyzes the transfer of acetyl group from acetyl coenzyme A to glucosamine-1-phosphate (GlcN-1-P) to produce N-acetylglucosamine-1-phosphate (GlcNAc-1-P), which is converted into UDP-GlcNAc by the transfer of uridine 5-monophosphate (from uridine 5-triphosphate), a reaction catalyzed by the N-terminal domain. The polypeptide is Bifunctional protein GlmU (Helicobacter pylori (strain HPAG1)).